The primary structure comprises 376 residues: Chaperone protein DnaJ (376 aa).

The region spanning 5–70 (DYYEILGVSK…QKRAAYDQYG (66 aa)) is the J domain. The CR-type zinc-finger motif lies at 131 to 209 (GVTKEIRIPT…CHGHGRVERS (79 aa)). Positions 144, 147, 161, 164, 183, 186, 197, and 200 each coordinate Zn(2+). CXXCXGXG motif repeat units lie at residues 144–151 (CDVCHGSG), 161–168 (CPTCHGSG), 183–190 (CPHCQGRG), and 197–204 (CNKCHGHG).

This sequence belongs to the DnaJ family. Homodimer. The cofactor is Zn(2+).

It localises to the cytoplasm. In terms of biological role, participates actively in the response to hyperosmotic and heat shock by preventing the aggregation of stress-denatured proteins and by disaggregating proteins, also in an autonomous, DnaK-independent fashion. Unfolded proteins bind initially to DnaJ; upon interaction with the DnaJ-bound protein, DnaK hydrolyzes its bound ATP, resulting in the formation of a stable complex. GrpE releases ADP from DnaK; ATP binding to DnaK triggers the release of the substrate protein, thus completing the reaction cycle. Several rounds of ATP-dependent interactions between DnaJ, DnaK and GrpE are required for fully efficient folding. Also involved, together with DnaK and GrpE, in the DNA replication of plasmids through activation of initiation proteins. This Shigella boydii serotype 18 (strain CDC 3083-94 / BS512) protein is Chaperone protein DnaJ.